The chain runs to 383 residues: Arginine biosynthesis bifunctional protein ArgJ (383 aa).

Positions 146, 168, 179, 259, 378, and 383 each coordinate substrate. The active-site Nucleophile is the Thr-179.

Belongs to the ArgJ family. In terms of assembly, heterotetramer of two alpha and two beta chains.

It localises to the cytoplasm. It catalyses the reaction N(2)-acetyl-L-ornithine + L-glutamate = N-acetyl-L-glutamate + L-ornithine. The enzyme catalyses L-glutamate + acetyl-CoA = N-acetyl-L-glutamate + CoA + H(+). Its pathway is amino-acid biosynthesis; L-arginine biosynthesis; L-ornithine and N-acetyl-L-glutamate from L-glutamate and N(2)-acetyl-L-ornithine (cyclic): step 1/1. It functions in the pathway amino-acid biosynthesis; L-arginine biosynthesis; N(2)-acetyl-L-ornithine from L-glutamate: step 1/4. Catalyzes two activities which are involved in the cyclic version of arginine biosynthesis: the synthesis of N-acetylglutamate from glutamate and acetyl-CoA as the acetyl donor, and of ornithine by transacetylation between N(2)-acetylornithine and glutamate. This is Arginine biosynthesis bifunctional protein ArgJ from Streptomyces avermitilis (strain ATCC 31267 / DSM 46492 / JCM 5070 / NBRC 14893 / NCIMB 12804 / NRRL 8165 / MA-4680).